The primary structure comprises 160 residues: Small ribosomal subunit protein uS7 (160 aa).

It belongs to the universal ribosomal protein uS7 family. As to quaternary structure, part of the 30S ribosomal subunit. Contacts proteins S9 and S11.

Its function is as follows. One of the primary rRNA binding proteins, it binds directly to 16S rRNA where it nucleates assembly of the head domain of the 30S subunit. Is located at the subunit interface close to the decoding center, probably blocks exit of the E-site tRNA. This is Small ribosomal subunit protein uS7 from Rickettsia canadensis (strain McKiel).